The primary structure comprises 451 residues: mRNA cleavage and polyadenylation factor CLP1 (451 aa).

ATP contacts are provided by residues K75 and 136–141 (NTGKTA).

This sequence belongs to the Clp1 family. Clp1 subfamily. In terms of assembly, component of a pre-mRNA cleavage factor complex. Interacts directly with PCF11.

It is found in the nucleus. In terms of biological role, required for endonucleolytic cleavage during polyadenylation-dependent pre-mRNA 3'-end formation. This chain is mRNA cleavage and polyadenylation factor CLP1, found in Candida glabrata (strain ATCC 2001 / BCRC 20586 / JCM 3761 / NBRC 0622 / NRRL Y-65 / CBS 138) (Yeast).